The following is a 355-amino-acid chain: Phenylalanine--tRNA ligase alpha subunit (355 aa).

Glu-273 provides a ligand contact to Mg(2+).

It belongs to the class-II aminoacyl-tRNA synthetase family. Phe-tRNA synthetase alpha subunit type 1 subfamily. Tetramer of two alpha and two beta subunits. Mg(2+) serves as cofactor.

Its subcellular location is the cytoplasm. It carries out the reaction tRNA(Phe) + L-phenylalanine + ATP = L-phenylalanyl-tRNA(Phe) + AMP + diphosphate + H(+). The sequence is that of Phenylalanine--tRNA ligase alpha subunit from Bifidobacterium adolescentis (strain ATCC 15703 / DSM 20083 / NCTC 11814 / E194a).